We begin with the raw amino-acid sequence, 837 residues long: Tuftelin-interacting protein 11 (837 aa).

Composition is skewed to basic and acidic residues over residues 1–13 (MSLS…GEGR) and 53–64 (VWAERDSDDERP). 3 disordered regions span residues 1–21 (MSLS…DDER), 53–72 (VWAE…KRAR), and 85–133 (LKKG…KGFA). The tract at residues 1 to 50 (MSLSHLYRDGEGRIDDDDDERENFEITDWDLQNEFNPNRQRHWQTKEEAT) is required for interaction with DHX15. 3 positions are modified to phosphoserine: serine 2, serine 59, and serine 98. Acidic residues predominate over residues 91 to 102 (EEAELEDSDDEE). The segment covering 103-116 (KPVKQDDFPKDFGP) has biased composition (basic and acidic residues). The residue at position 144 (serine 144) is a Phosphoserine. A G-patch domain is found at 149 to 195 (TKGIGQKLLQKMGYVPGRGLGKNAQGIINPIEAKQRKGKGAVGAYGS). A disordered region spans residues 179–236 (IEAKQRKGKGAVGAYGSERTTQSMQDFPVVDSEEEAEEEFQKELSQWRKDPSGSKKKP). Serine 210 bears the Phosphoserine mark. Residues 217–231 (EFQKELSQWRKDPSG) are compositionally biased toward basic and acidic residues. The Nuclear localization signal signature appears at 700-705 (VKDKFN). Positions 710–734 (IMNRAVSSNVGAYMQPGARENIAYL) are required for nuclear speckle localization.

The protein belongs to the TFP11/STIP family. Identified in the spliceosome C complex. Found in the Intron Large (IL) complex, a post-mRNA release spliceosomal complex containing the excised intron, U2, U5 and U6 snRNPs, and splicing factors. Interacts with TUFT1. Interacts with DHX15; indicative for a recruitment of DHX15 to the IL complex. Interacts with GCFC2.

It is found in the cytoplasm. Its subcellular location is the nucleus. In terms of biological role, involved in pre-mRNA splicing, specifically in spliceosome disassembly during late-stage splicing events. Intron turnover seems to proceed through reactions in two lariat-intron associated complexes termed Intron Large (IL) and Intron Small (IS). In cooperation with DHX15 seems to mediate the transition of the U2, U5 and U6 snRNP-containing IL complex to the snRNP-free IS complex leading to efficient debranching and turnover of excised introns. May play a role in the differentiation of ameloblasts and odontoblasts or in the forming of the enamel extracellular matrix. In Pongo abelii (Sumatran orangutan), this protein is Tuftelin-interacting protein 11 (TFIP11).